We begin with the raw amino-acid sequence, 547 residues long: MSLVESPPWQALKSKYQELSSLHMRDFFAQDKKRGTRLSLEAAGLYFDYSKNRVDEKTIDLLCESANACNLPLRIEQLFSGKLTNESGEMVGFHTALRQVNNFSFKTNNNAIQEIHASWEKIKKLSIRIREGDYKGFTNKSITDIVNIGIGGSSLGPQMAYNALKPYVKAPLRCHFISNLDDTDFYETVRTLNPETTLFIITSKTFTTKETLENARRATEWLMQAAKKENLIQTHFMAVTAAPEKAHEFGIQKDNIFMLWPWVGGRFSVWSAAGLSLAIAIGWEEFFEFLRGAHAMDTHFRQAEFNKNMPILLALLSIWYINFFHAKTQAIIPYSQRLVYLPDYLTQLHMESLGKSVQLDGSAVHWQTGAVVWGDLGTNSQHSFHQLFLQGTMVIPVDFIAFLKNSRESHWQLPLIANCLGQSQTLMEGYDKEGVMRDLINQGIEHEKAEKLATYRLIRGNNPSNTIILEELNPYSLGSLLALYEHKVYVQSVIWNINPFDQWGVERGKHLAKDILQALQAETDQSSFDSSTERLINYVLKIKGNRP.

The active-site Proton donor is glutamate 351. Residues histidine 382 and lysine 509 contribute to the active site.

The protein belongs to the GPI family.

It is found in the cytoplasm. It carries out the reaction alpha-D-glucose 6-phosphate = beta-D-fructose 6-phosphate. It participates in carbohydrate biosynthesis; gluconeogenesis. It functions in the pathway carbohydrate degradation; glycolysis; D-glyceraldehyde 3-phosphate and glycerone phosphate from D-glucose: step 2/4. Catalyzes the reversible isomerization of glucose-6-phosphate to fructose-6-phosphate. This chain is Glucose-6-phosphate isomerase, found in Coxiella burnetii (strain CbuG_Q212) (Coxiella burnetii (strain Q212)).